Here is a 358-residue protein sequence, read N- to C-terminus: DNA-directed RNA polymerase subunit alpha (358 aa).

The alpha N-terminal domain (alpha-NTD) stretch occupies residues 1 to 231 (MIQNVTDDKI…NIFLSLSNSS (231 aa)). Positions 266-358 (QESLGWKKIS…LELINNKDIS (93 aa)) are alpha C-terminal domain (alpha-CTD).

It belongs to the RNA polymerase alpha chain family. In plastids the minimal PEP RNA polymerase catalytic core is composed of four subunits: alpha, beta, beta', and beta''. When a (nuclear-encoded) sigma factor is associated with the core the holoenzyme is formed, which can initiate transcription.

The protein resides in the plastid. The protein localises to the chloroplast. The catalysed reaction is RNA(n) + a ribonucleoside 5'-triphosphate = RNA(n+1) + diphosphate. Functionally, DNA-dependent RNA polymerase catalyzes the transcription of DNA into RNA using the four ribonucleoside triphosphates as substrates. This Chara vulgaris (Common stonewort) protein is DNA-directed RNA polymerase subunit alpha.